Reading from the N-terminus, the 545-residue chain is MTLLTQSSTWQALSAHSKNVPHMRELFATDAARFNKMSLSACGLLLDYSKNRATAETLDLLFTLASNSQLEAKIKAMFAGEIINTTEKRAVLHTALRSTAEQSIIAEGQDIVPEVQQTLNKMQGFVSSVTSGQWKGYTGKAITDIVSIGIGGSFLGPKIVSQALRPYWNPELKCHFVANVDGTSISEKLKLLDPETTLFIMSSKSFGTQETLTNTLTAREWFLAKGGLQSDVAKHFVAVTSNVAKATDFGIDADNIFPMWDWVGGRYSLWSAIGLPIALLIGMDNFRALLSGAHQMDEHFANAPLTENMPVIMGLLSLWYGNFFNAQSHVVLTYDHYLRGLPAYFQQLDMESNGKSVTLNGTDVDYSTGPVIWGGEGTNGQHAYHQLLHQGTALIPADFIMPLQSHNPIGEHHDQLASNCFGQTQALMQGRTFDEALAELANSALPAAEKQLIAKHKVMPGNKPSNTLLMDKLTPSTLGALIALYEHRTFVQGAIWDINSFDQWGVELGKDLGNDVLTRIGASQDCDALDASSNALINLYRHGKI.

The active-site Proton donor is the E351. Residues H382 and K510 contribute to the active site.

Belongs to the GPI family.

Its subcellular location is the cytoplasm. It carries out the reaction alpha-D-glucose 6-phosphate = beta-D-fructose 6-phosphate. It functions in the pathway carbohydrate biosynthesis; gluconeogenesis. The protein operates within carbohydrate degradation; glycolysis; D-glyceraldehyde 3-phosphate and glycerone phosphate from D-glucose: step 2/4. Its function is as follows. Catalyzes the reversible isomerization of glucose-6-phosphate to fructose-6-phosphate. In Shewanella baltica (strain OS195), this protein is Glucose-6-phosphate isomerase.